A 258-amino-acid chain; its full sequence is MSKVLQCCQLSKSYIQGDIETKVLNDLELSVDKGELLAVVGSSGCGKSTFLHLAGALDSPSSGKVLINNIDIHQLSDKERAKFRNEHIGFIYQFHHLMMEFNAQENVAMPLMIRGEKPKDALLAAKEMLDQVGLSHRIDYRPSQLSGGERQRVAIARALVTKPSLVLADEPTGNLDSDTAEQIYQLIRSLNKTAQTSFVIVTHDLVLANRMDRQVKLVQGQLRPLSDNSEQALPPTSSITDPANNIKDNEPQANERHV.

One can recognise an ABC transporter domain in the interval 5–244; sequence LQCCQLSKSY…PTSSITDPAN (240 aa). Position 41 to 48 (41 to 48) interacts with ATP; that stretch reads GSSGCGKS. Residues 222–258 are disordered; that stretch reads LRPLSDNSEQALPPTSSITDPANNIKDNEPQANERHV. A compositionally biased stretch (polar residues) spans 226 to 243; it reads SDNSEQALPPTSSITDPA. Over residues 247–258 the composition is skewed to basic and acidic residues; the sequence is KDNEPQANERHV.

Belongs to the ABC transporter superfamily. Lipoprotein translocase (TC 3.A.1.125) family. As to quaternary structure, the complex is composed of two ATP-binding proteins (LolD) and two transmembrane proteins (LolC and LolE).

The protein resides in the cell inner membrane. Its function is as follows. Part of the ABC transporter complex LolCDE involved in the translocation of mature outer membrane-directed lipoproteins, from the inner membrane to the periplasmic chaperone, LolA. Responsible for the formation of the LolA-lipoprotein complex in an ATP-dependent manner. The sequence is that of Lipoprotein-releasing system ATP-binding protein LolD from Colwellia psychrerythraea (strain 34H / ATCC BAA-681) (Vibrio psychroerythus).